We begin with the raw amino-acid sequence, 936 residues long: Protocadherin alpha-5 (936 aa).

Residues 1-28 (MVYSRRGSLGSRLLLLWLLLAYWKAGSG) form the signal peptide. The Extracellular portion of the chain corresponds to 29 to 696 (QLHYSIPEEA…GPEAALVDVN (668 aa)). Cadherin domains lie at 33–132 (SIPE…PPRF), 156–241 (ASDL…APEF), 242–349 (DKSI…TPEM), 350–454 (AITT…LRAF), 455–564 (AQPQ…APAL), and 580–677 (VPRS…APKA). N264, N448, and N547 each carry an N-linked (GlcNAc...) asparagine glycan. Residues 697 to 717 (VYLIIAICAVSSLLVLTLLLY) traverse the membrane as a helical segment. Topologically, residues 718–936 (TALRCSAQPT…GNSTTDNSDQ (219 aa)) are cytoplasmic. Disordered regions lie at residues 759-793 (SGEA…PDWR), 815-875 (RAGP…DKFI), and 887-936 (QEPA…NSDQ). PXXP repeat units follow at residues 773–776 (PSLP), 785–788 (PRQP), 818–821 (PGGP), 873–876 (KFII), and 877–890 (PGSP…QEPA). Residues 773 to 890 (PSLPQGPTST…AIISIRQEPA (118 aa)) are 5 X 4 AA repeats of P-X-X-P. Over residues 774–786 (SLPQGPTSTDNPR) the composition is skewed to polar residues. Basic and acidic residues predominate over residues 895–909 (DKSDFITFGKKEETK).

Its subcellular location is the cell membrane. Functionally, potential calcium-dependent cell-adhesion protein. May be involved in the establishment and maintenance of specific neuronal connections in the brain. The chain is Protocadherin alpha-5 (PCDHA5) from Pan troglodytes (Chimpanzee).